Reading from the N-terminus, the 378-residue chain is Fetuin-B (378 aa).

The first 18 residues, 1–18, serve as a signal peptide directing secretion; the sequence is MGVLRLLVLCTLAACCVA. Cystatin fetuin-B-type domains follow at residues 28-141 and 152-261; these read NAPF…YNCT and SMCP…VSCE. Asparagine 40 carries an N-linked (GlcNAc...) asparagine glycan. 5 disulfides stabilise this stretch: cysteine 96/cysteine 107, cysteine 120/cysteine 140, cysteine 154/cysteine 157, cysteine 217/cysteine 224, and cysteine 237/cysteine 260. An N-linked (GlcNAc...) asparagine glycan is attached at asparagine 139. Disordered regions lie at residues 266–338 and 357–378; these read QDQV…PQGD and LPFP…QRTP. Residues 286–297 are compositionally biased toward polar residues; that stretch reads QKNTAPTSSPSI. O-linked (GalNAc...) threonine glycosylation is found at threonine 289 and threonine 292. At serine 316 the chain carries Phosphoserine. A compositionally biased stretch (basic and acidic residues) spans 362–378; sequence KEQRSPECPGPEKQRTP.

Belongs to the fetuin family. Liver.

Its subcellular location is the secreted. Functionally, protease inhibitor required for egg fertilization. Required to prevent premature zona pellucida hardening before fertilization, probably by inhibiting the protease activity of ASTL, a protease that mediates the cleavage of ZP2 and triggers zona pellucida hardening. The chain is Fetuin-B (Fetub) from Rattus norvegicus (Rat).